Reading from the N-terminus, the 504-residue chain is Maturase K (504 aa).

This sequence belongs to the intron maturase 2 family. MatK subfamily.

The protein localises to the plastid. It localises to the chloroplast. In terms of biological role, usually encoded in the trnK tRNA gene intron. Probably assists in splicing its own and other chloroplast group II introns. In Capsella bursa-pastoris (Shepherd's purse), this protein is Maturase K.